We begin with the raw amino-acid sequence, 394 residues long: NAD(P)H-quinone oxidoreductase subunit H (394 aa).

It belongs to the complex I 49 kDa subunit family. As to quaternary structure, NDH-1 can be composed of about 15 different subunits; different subcomplexes with different compositions have been identified which probably have different functions.

Its subcellular location is the cellular thylakoid membrane. It carries out the reaction a plastoquinone + NADH + (n+1) H(+)(in) = a plastoquinol + NAD(+) + n H(+)(out). The enzyme catalyses a plastoquinone + NADPH + (n+1) H(+)(in) = a plastoquinol + NADP(+) + n H(+)(out). In terms of biological role, NDH-1 shuttles electrons from an unknown electron donor, via FMN and iron-sulfur (Fe-S) centers, to quinones in the respiratory and/or the photosynthetic chain. The immediate electron acceptor for the enzyme in this species is believed to be plastoquinone. Couples the redox reaction to proton translocation, and thus conserves the redox energy in a proton gradient. Cyanobacterial NDH-1 also plays a role in inorganic carbon-concentration. In Thermosynechococcus vestitus (strain NIES-2133 / IAM M-273 / BP-1), this protein is NAD(P)H-quinone oxidoreductase subunit H.